A 334-amino-acid chain; its full sequence is Protein-methionine-sulfoxide reductase catalytic subunit MsrP (334 aa).

Positions 1-44 (MKKNQFLKESDVTAESVFFMKRRQVLKALGISAAALSLPHAAHA) form a signal peptide, tat-type signal. Mo-molybdopterin is bound by residues asparagine 88, 91–92 (YE), cysteine 146, threonine 181, asparagine 233, arginine 238, and 249–251 (GIK).

Belongs to the MsrP family. Heterodimer of a catalytic subunit (MsrP) and a heme-binding subunit (MsrQ). It depends on Mo-molybdopterin as a cofactor. Predicted to be exported by the Tat system. The position of the signal peptide cleavage has not been experimentally proven.

The protein localises to the periplasm. The enzyme catalyses L-methionyl-[protein] + a quinone + H2O = L-methionyl-(S)-S-oxide-[protein] + a quinol. It carries out the reaction L-methionyl-[protein] + a quinone + H2O = L-methionyl-(R)-S-oxide-[protein] + a quinol. Functionally, part of the MsrPQ system that repairs oxidized periplasmic proteins containing methionine sulfoxide residues (Met-O), using respiratory chain electrons. Thus protects these proteins from oxidative-stress damage caused by reactive species of oxygen and chlorine generated by the host defense mechanisms. MsrPQ is essential for the maintenance of envelope integrity under bleach stress, rescuing a wide series of structurally unrelated periplasmic proteins from methionine oxidation, including the primary periplasmic chaperone SurA and the lipoprotein Pal. The catalytic subunit MsrP is non-stereospecific, being able to reduce both (R-) and (S-) diastereoisomers of methionine sulfoxide. The sequence is that of Protein-methionine-sulfoxide reductase catalytic subunit MsrP from Escherichia coli O17:K52:H18 (strain UMN026 / ExPEC).